The following is a 650-amino-acid chain: Threonine--tRNA ligase (650 aa).

A TGS domain is found at 1 to 66 (MVQITLPDGS…EHDAQLAIVT (66 aa)). Positions 247-538 (DHRKIGRDLD…LIENHAGAMP (292 aa)) are catalytic. The Zn(2+) site is built by cysteine 338, histidine 389, and histidine 515.

The protein belongs to the class-II aminoacyl-tRNA synthetase family. Homodimer. Zn(2+) serves as cofactor.

Its subcellular location is the cytoplasm. It carries out the reaction tRNA(Thr) + L-threonine + ATP = L-threonyl-tRNA(Thr) + AMP + diphosphate + H(+). In terms of biological role, catalyzes the attachment of threonine to tRNA(Thr) in a two-step reaction: L-threonine is first activated by ATP to form Thr-AMP and then transferred to the acceptor end of tRNA(Thr). Also edits incorrectly charged L-seryl-tRNA(Thr). In Bordetella petrii (strain ATCC BAA-461 / DSM 12804 / CCUG 43448), this protein is Threonine--tRNA ligase.